The chain runs to 1120 residues: Isoleucine--tRNA ligase (1120 aa).

A 'HIGH' region motif is present at residues 64-74 (PFANGLPHYGH). The 'KMSKS' region signature appears at 647-651 (KLSKR). An ATP-binding site is contributed by Lys-650.

This sequence belongs to the class-I aminoacyl-tRNA synthetase family. IleS type 2 subfamily. In terms of assembly, monomer. It depends on Zn(2+) as a cofactor.

The protein localises to the cytoplasm. It carries out the reaction tRNA(Ile) + L-isoleucine + ATP = L-isoleucyl-tRNA(Ile) + AMP + diphosphate. In terms of biological role, catalyzes the attachment of isoleucine to tRNA(Ile). As IleRS can inadvertently accommodate and process structurally similar amino acids such as valine, to avoid such errors it has two additional distinct tRNA(Ile)-dependent editing activities. One activity is designated as 'pretransfer' editing and involves the hydrolysis of activated Val-AMP. The other activity is designated 'posttransfer' editing and involves deacylation of mischarged Val-tRNA(Ile). In Ehrlichia canis (strain Jake), this protein is Isoleucine--tRNA ligase.